A 339-amino-acid chain; its full sequence is Probable G-protein coupled receptor 33 (339 aa).

Over 1 to 30 the chain is Extracellular; sequence MDRVNSSGHVISVSPSLTNSTGVPTPAPKA. 2 N-linked (GlcNAc...) asparagine glycosylation sites follow: N5 and N19. The chain crosses the membrane as a helical span at residues 31–53; that stretch reads IIAAALFMSFIVGTISNGLYLWM. The Cytoplasmic portion of the chain corresponds to 54–64; that stretch reads LKFKMQRTVNT. Residues 65-86 form a helical membrane-spanning segment; it reads LLFFHLILSYFISTLILPFMAT. Residues 87 to 103 lie on the Extracellular side of the membrane; the sequence is SFLQDNHWAFGSVLCKV. A disulfide bridge connects residues C101 and C179. A helical transmembrane segment spans residues 104–124; sequence FNSTLSVSMFASVFFLSAISV. At 125-143 the chain is on the cytoplasmic side; that stretch reads DRYHLTLHPVWSQQHRTPR. The chain crosses the membrane as a helical span at residues 144-165; that stretch reads WASRIALRIWILATILSIPYLV. At 166 to 209 the chain is on the extracellular side; it reads FRETHDDHKGRIKCQNNYIVGTNWESSEHQTLGQWIHAACFGRR. The helical transmembrane segment at 210–230 threads the bilayer; that stretch reads FLLGFLLPFLVIVFCYKRVAT. Residues 231–246 lie on the Cytoplasmic side of the membrane; that stretch reads KMKDKGLFKSSKPFKV. Residues 247–268 traverse the membrane as a helical segment; sequence MLTAVVSFFVCWMPYHVHSGLV. Residues 269–283 are Extracellular-facing; the sequence is LTKSQPLPSQLTLGL. Residues 284-303 form a helical membrane-spanning segment; the sequence is AVVTISFNTVVSPILYLFTG. The Cytoplasmic portion of the chain corresponds to 304–339; it reads ENFEVFKKSILALFKSTFSDSSATERTQTLNSETEI.

It belongs to the G-protein coupled receptor 1 family.

The protein localises to the cell membrane. Functionally, orphan receptor; could be a chemoattractant receptor. This Rattus rattus (Black rat) protein is Probable G-protein coupled receptor 33 (Gpr33).